We begin with the raw amino-acid sequence, 218 residues long: MSEKYTLSLEPRAVVGKKVKRLRRSGILPATVYGKGIEPISVQVDARSFNAVYRRAGRTALVELHIAGRQPLAAFIHALQRHPVTRDIIHADFRAVDLSQEVEVAVPLHIEGESPLVESGEAVLNQVLNAIEIRALPSNIPAHLTVDISGLDAFDKSIHVRDLALPPGVTLATPGDELVVSLAHARAAEEEAPAAEETTAEPELVRERREPRAEEEEE.

Residues 185-218 (ARAAEEEAPAAEETTAEPELVRERREPRAEEEEE) are disordered. Residues 190-200 (EEAPAAEETTA) are compositionally biased toward acidic residues. Positions 203 to 212 (ELVRERREPR) are enriched in basic and acidic residues.

This sequence belongs to the bacterial ribosomal protein bL25 family. CTC subfamily. Part of the 50S ribosomal subunit; part of the 5S rRNA/L5/L18/L25 subcomplex. Contacts the 5S rRNA. Binds to the 5S rRNA independently of L5 and L18.

Its function is as follows. This is one of the proteins that binds to the 5S RNA in the ribosome where it forms part of the central protuberance. The polypeptide is Large ribosomal subunit protein bL25 (Roseiflexus castenholzii (strain DSM 13941 / HLO8)).